A 412-amino-acid chain; its full sequence is Ribosomal RNA large subunit methyltransferase G (412 aa).

Positions 386-412 (KAEPHENGESSSDTPNPQSSLYGGVKR) are disordered. Residues 394 to 406 (ESSSDTPNPQSSL) are compositionally biased toward polar residues.

Belongs to the methyltransferase superfamily. RlmG family.

The protein resides in the cytoplasm. It catalyses the reaction guanosine(1835) in 23S rRNA + S-adenosyl-L-methionine = N(2)-methylguanosine(1835) in 23S rRNA + S-adenosyl-L-homocysteine + H(+). Specifically methylates the guanine in position 1835 (m2G1835) of 23S rRNA. The polypeptide is Ribosomal RNA large subunit methyltransferase G (Shewanella sediminis (strain HAW-EB3)).